A 328-amino-acid chain; its full sequence is MVSQTSTATIGFTLEDFAALLDKYDYHFSPGDIVAGTVFSMESRGALIDIGAKTAAYIPIQEMSINRVDDPEEVLQPNETREFFILTDENEDGQLTLSIRRIEYMRAWERVRQLQAEDATVRSNVFATNRGGALVRIEGLRGFIPGSHISAREAKEDLVGEDLPLKFLEVDEERNRLVLSHRRALVERKMNGLEVAQVVVGSVRGIKPYGAFIDIGGVSGLLHISEISHDHIDTPHSVFNVNDEIKVMIIDLDAERGRISLSTKQLEPEPGAMLKDRDLVNEMADEMAEIFRQKRLAEAQGIPYEPPTSVDDTDDEEDESLAVSAVDE.

S1 motif domains lie at 31 to 100 (GDIV…LSIR), 118 to 182 (DATV…LSHR), and 196 to 264 (AQVV…LSTK). The tract at residues 298–328 (EAQGIPYEPPTSVDDTDDEEDESLAVSAVDE) is disordered. Residues 311–328 (DDTDDEEDESLAVSAVDE) show a composition bias toward acidic residues.

This sequence belongs to the bacterial ribosomal protein bS1 family.

In terms of biological role, binds mRNA. This is Small ribosomal subunit protein bS1A (rps1A) from Synechocystis sp. (strain ATCC 27184 / PCC 6803 / Kazusa).